Here is a 225-residue protein sequence, read N- to C-terminus: Putative 5'-nucleotidase alr3139 (225 aa).

The a divalent metal cation site is built by D8, D9, S37, and N88.

The protein belongs to the SurE nucleotidase family. Requires a divalent metal cation as cofactor.

Its subcellular location is the cytoplasm. It carries out the reaction a ribonucleoside 5'-phosphate + H2O = a ribonucleoside + phosphate. Nucleotidase that shows phosphatase activity on nucleoside 5'-monophosphates. This chain is Putative 5'-nucleotidase alr3139, found in Synechocystis sp. (strain ATCC 27184 / PCC 6803 / Kazusa).